We begin with the raw amino-acid sequence, 247 residues long: Chymase (247 aa).

Positions 1–19 are cleaved as a signal peptide; the sequence is MLLLPLPLLLLFLCSRAEA. Residues 20–21 constitute a propeptide, activation peptide; that stretch reads GE. The 224-residue stretch at 22–245 folds into the Peptidase S1 domain; the sequence is IIGGTECKPH…YRPWINKILQ (224 aa). Cys51 and Cys67 form a disulfide bridge. The active-site Charge relay system is the His66. Asn80 and Asn103 each carry an N-linked (GlcNAc...) asparagine glycan. Asp110 (charge relay system) is an active-site residue. Intrachain disulfides connect Cys144–Cys209 and Cys175–Cys188. Ser203 acts as the Charge relay system in catalysis.

The protein belongs to the peptidase S1 family. Granzyme subfamily.

Its subcellular location is the secreted. The protein localises to the cytoplasmic granule. It catalyses the reaction Preferential cleavage: Phe-|-Xaa &gt; Tyr-|-Xaa &gt; Trp-|-Xaa &gt; Leu-|-Xaa.. In terms of biological role, major secreted protease of mast cells with suspected roles in vasoactive peptide generation, extracellular matrix degradation, and regulation of gland secretion. The chain is Chymase (CMA1) from Papio hamadryas (Hamadryas baboon).